Reading from the N-terminus, the 448-residue chain is Probable ribonuclease FAU-1 (448 aa).

The protein belongs to the FAU-1 family.

Its function is as follows. Probable RNase involved in rRNA stability through maturation and/or degradation of precursor rRNAs. Binds to RNA in loop regions with AU-rich sequences. The polypeptide is Probable ribonuclease FAU-1 (Pyrobaculum calidifontis (strain DSM 21063 / JCM 11548 / VA1)).